A 276-amino-acid chain; its full sequence is Large ribosomal subunit protein uL2 (276 aa).

The segment at 221 to 276 (RGSAMNPNDHPHGGGEGRAPIGRKSPMTPWGKKARGIKTRDRKKSSNELIIRRRTK) is disordered. Positions 252-263 (KKARGIKTRDRK) are enriched in basic residues.

The protein belongs to the universal ribosomal protein uL2 family. Part of the 50S ribosomal subunit. Forms a bridge to the 30S subunit in the 70S ribosome.

In terms of biological role, one of the primary rRNA binding proteins. Required for association of the 30S and 50S subunits to form the 70S ribosome, for tRNA binding and peptide bond formation. It has been suggested to have peptidyltransferase activity; this is somewhat controversial. Makes several contacts with the 16S rRNA in the 70S ribosome. The protein is Large ribosomal subunit protein uL2 of Phytoplasma australiense.